We begin with the raw amino-acid sequence, 232 residues long: Fibrillarin-like rRNA/tRNA 2'-O-methyltransferase (232 aa).

S-adenosyl-L-methionine is bound by residues 89 to 90 (TT), 108 to 109 (EF), 133 to 134 (DA), and 153 to 156 (DIAQ).

This sequence belongs to the methyltransferase superfamily. Fibrillarin family. In terms of assembly, interacts with nop5. Component of box C/D small ribonucleoprotein (sRNP) particles that contain rpl7ae, FlpA and nop5, plus a guide RNA.

Its function is as follows. Involved in pre-rRNA and tRNA processing. Utilizes the methyl donor S-adenosyl-L-methionine to catalyze the site-specific 2'-hydroxyl methylation of ribose moieties in rRNA and tRNA. Site specificity is provided by a guide RNA that base pairs with the substrate. Methylation occurs at a characteristic distance from the sequence involved in base pairing with the guide RNA. This is Fibrillarin-like rRNA/tRNA 2'-O-methyltransferase from Methanopyrus kandleri (strain AV19 / DSM 6324 / JCM 9639 / NBRC 100938).